A 405-amino-acid chain; its full sequence is S-adenosylmethionine synthase (405 aa).

141 to 146 (GQGSVD) is a binding site for ATP.

Belongs to the AdoMet synthase 2 family. Mg(2+) serves as cofactor.

The enzyme catalyses L-methionine + ATP + H2O = S-adenosyl-L-methionine + phosphate + diphosphate. It participates in amino-acid biosynthesis; S-adenosyl-L-methionine biosynthesis; S-adenosyl-L-methionine from L-methionine: step 1/1. In terms of biological role, catalyzes the formation of S-adenosylmethionine from methionine and ATP. In Methanococcus maripaludis (Methanococcus deltae), this protein is S-adenosylmethionine synthase.